A 541-amino-acid polypeptide reads, in one-letter code: MVNQMRSAIVKVFSTKHSLTLPAPALHYIEEVLIENEIPEDEWMVGLEFWAKEYLKAEDSSSLVSLQALKKAYENLQLGTTEDTQVADPSEVNVESHFSVVDSFDMPAMRYDPVRSGFVQSKAQPSVAGQASSRSAFLRERWAIIKEIILRNENFTPPAIGGHDRANYLKLTSIRNLLGRAGQLFLLFGMLARNEEGKLCLEDGESRVVLDMEDAVPGEGLFTEGCMVLIEGEYTVEETVRVLAMGHPPSERRNIARSLHGHVDFLGGGAVSLKEEQKYNPTVLANTQISFVILSDVWLDHPRTMPALRQMFEGYANTAEYRPMVFVLCGNFCQGGWEGQEGLKRYSRGFNSLAELLQSIPLLHSSHFVFVPGPSDPWSSTTLPRPSLPSAFTTRLSNRIPNARFVSNPCRLKYFGMEIVICREDLMGKMMRNLVVVKEGEEMNMKRYLVQTILDQAHLSPLPISVRPTLWEYDHALRLYPMPSAVVLADKYERYELTYEGCHVFNPGKFVGGIGEDGWEFEWSMYYPATGRSERSVLTME.

The protein belongs to the DNA polymerase epsilon subunit B family. As to quaternary structure, heterotetramer. Consists of four subunits: POL2, DPB2, DPB3 and DPB4.

It localises to the nucleus. As accessory component of the DNA polymerase epsilon (DNA polymerase II) participates in chromosomal DNA replication. The chain is DNA polymerase epsilon subunit B (DPB2) from Cryptococcus neoformans var. neoformans serotype D (strain B-3501A) (Filobasidiella neoformans).